We begin with the raw amino-acid sequence, 142 residues long: Gonadotropin subunit beta-2 (142 aa).

An N-terminal signal peptide occupies residues 1-24 (MLGLHVGTLMISLFLCILLEPVEG). Disulfide bonds link cysteine 30/cysteine 78, cysteine 44/cysteine 93, cysteine 47/cysteine 131, cysteine 55/cysteine 109, cysteine 59/cysteine 111, and cysteine 114/cysteine 121. Asparagine 34 is a glycosylation site (N-linked (GlcNAc...) asparagine).

The protein belongs to the glycoprotein hormones subunit beta family. As to quaternary structure, heterodimer of an alpha and a beta chain.

Its subcellular location is the secreted. Its function is as follows. Involved in gametogenesis and steroidogenesis. This is Gonadotropin subunit beta-2 (cgbb) from Coregonus autumnalis (Arctic cisco).